We begin with the raw amino-acid sequence, 128 residues long: Large ribosomal subunit protein uL22 (128 aa).

This sequence belongs to the universal ribosomal protein uL22 family. As to quaternary structure, part of the 50S ribosomal subunit.

Its function is as follows. This protein binds specifically to 23S rRNA; its binding is stimulated by other ribosomal proteins, e.g. L4, L17, and L20. It is important during the early stages of 50S assembly. It makes multiple contacts with different domains of the 23S rRNA in the assembled 50S subunit and ribosome. The globular domain of the protein is located near the polypeptide exit tunnel on the outside of the subunit, while an extended beta-hairpin is found that lines the wall of the exit tunnel in the center of the 70S ribosome. In Nitrobacter winogradskyi (strain ATCC 25391 / DSM 10237 / CIP 104748 / NCIMB 11846 / Nb-255), this protein is Large ribosomal subunit protein uL22.